A 167-amino-acid polypeptide reads, in one-letter code: NAD(P)H-quinone oxidoreductase subunit I, chloroplastic (167 aa).

4Fe-4S ferredoxin-type domains lie at 55 to 84 (GRIHFEFDKCIACEVCVRVCPIDLPVVDWK) and 95 to 124 (LNYSIDFGICIFCGNCVEYCPTNCLSMTEE). [4Fe-4S] cluster-binding residues include Cys-64, Cys-67, Cys-70, Cys-74, Cys-104, Cys-107, Cys-110, and Cys-114.

This sequence belongs to the complex I 23 kDa subunit family. As to quaternary structure, NDH is composed of at least 16 different subunits, 5 of which are encoded in the nucleus. Requires [4Fe-4S] cluster as cofactor.

It localises to the plastid. Its subcellular location is the chloroplast thylakoid membrane. The enzyme catalyses a plastoquinone + NADH + (n+1) H(+)(in) = a plastoquinol + NAD(+) + n H(+)(out). The catalysed reaction is a plastoquinone + NADPH + (n+1) H(+)(in) = a plastoquinol + NADP(+) + n H(+)(out). Its function is as follows. NDH shuttles electrons from NAD(P)H:plastoquinone, via FMN and iron-sulfur (Fe-S) centers, to quinones in the photosynthetic chain and possibly in a chloroplast respiratory chain. The immediate electron acceptor for the enzyme in this species is believed to be plastoquinone. Couples the redox reaction to proton translocation, and thus conserves the redox energy in a proton gradient. In Arabis hirsuta (Hairy rock-cress), this protein is NAD(P)H-quinone oxidoreductase subunit I, chloroplastic.